Consider the following 145-residue polypeptide: Hemoglobin subunit beta (145 aa).

Residues Met1 to His145 form the Globin domain. Phosphothreonine is present on Thr11. Lys58 is subject to N6-acetyllysine. His62 lines the heme b pocket. Lys81 carries the N6-acetyllysine modification. Residue His91 coordinates heme b. The residue at position 92 (Cys92) is an S-nitrosocysteine.

It belongs to the globin family. Heterotetramer of two alpha chains and two beta chains. As to expression, red blood cells.

In terms of biological role, involved in oxygen transport from the lung to the various peripheral tissues. In Alces alces alces (European moose), this protein is Hemoglobin subunit beta (HBB).